Consider the following 198-residue polypeptide: uncharacterized protein (198 aa).

The C4-type zinc-finger motif lies at 9-43; it reads CPVCGGKGTFVITSHQIDIPYFGPVLETTMICEKC.

Belongs to the ZPR1 family.

This is an uncharacterized protein from Methanocaldococcus jannaschii (strain ATCC 43067 / DSM 2661 / JAL-1 / JCM 10045 / NBRC 100440) (Methanococcus jannaschii).